We begin with the raw amino-acid sequence, 315 residues long: Protein-L-isoaspartate O-methyltransferase (315 aa).

Disordered stretches follow at residues 1 to 47 (MSGE…KPAA) and 59 to 89 (RALP…AAPK). The span at 14–34 (EDLKRAPRKSEVRSGSGERHA) shows a compositional bias: basic and acidic residues. Low complexity-rich tracts occupy residues 35 to 47 (ASAV…KPAA) and 59 to 81 (RALP…LKPA). Serine 162 is an active-site residue.

Belongs to the methyltransferase superfamily. L-isoaspartyl/D-aspartyl protein methyltransferase family.

The protein localises to the cytoplasm. The enzyme catalyses [protein]-L-isoaspartate + S-adenosyl-L-methionine = [protein]-L-isoaspartate alpha-methyl ester + S-adenosyl-L-homocysteine. Catalyzes the methyl esterification of L-isoaspartyl residues in peptides and proteins that result from spontaneous decomposition of normal L-aspartyl and L-asparaginyl residues. It plays a role in the repair and/or degradation of damaged proteins. The polypeptide is Protein-L-isoaspartate O-methyltransferase (Burkholderia ambifaria (strain MC40-6)).